A 643-amino-acid chain; its full sequence is MIKITLKDGSIKEVEAGLSIFEIAQSISQGLARNACCGILNGKVEDLRFIVNEDSSLEICTFDSKEGQHAFNHTASHVLAAAVKRLFPQDKLAIGPSIDNGFYYDFDTEKSFSADQLNKLEEEMKKIIKENPEIKRFELPRNEALELMKDEPYKVELINDLPEGEVISFYQIGDFVDLCAGPHLMAVKPIKAVKLLRSTGAYWKGDEKNKMLSRVYGTAFPKKSELDAYLEALEEAKKRDHNKLGRELGIFTTDENVGQGLPLLMPKGARIIQTLQRWIEDEEQRRGYVLTKTPLMAKSDLYKISGHWDHYKDGMFVLGDEEKDSEVFALRPMTCPFQYAIYNSTQHSYRDLPVRFAETSTLFRNESSGEMHGLIRVRQFTLADGHIVCTPEQLEDEFKNTVDLVKYVMETLGIADDITYRFSKWDPNNTEKYINDPEAWENTQNIMREILNHLNIDFTEADDEAAFYGPKLDIQFKNVHGKEDTIITIQIDFALAERFGMYYIDKDGEKKRPYIIHRSSIGCYERTLAMLIEKYAGALPTWIAPVQAKVLPLSDKYADYANEVVEELRRRGVRVEADHRAEKIGYKIREARLERTPYILVVGEKEAENKEVSVRSRKNGEEGAMPLADFVNRIVLEIANREN.

The 61-residue stretch at 1-61 folds into the TGS domain; the sequence is MIKITLKDGS…NEDSSLEICT (61 aa). The segment at 240–540 is catalytic; that stretch reads DHNKLGRELG…LIEKYAGALP (301 aa). Positions 335, 386, and 517 each coordinate Zn(2+).

This sequence belongs to the class-II aminoacyl-tRNA synthetase family. Homodimer. Zn(2+) serves as cofactor.

The protein resides in the cytoplasm. It carries out the reaction tRNA(Thr) + L-threonine + ATP = L-threonyl-tRNA(Thr) + AMP + diphosphate + H(+). Functionally, catalyzes the attachment of threonine to tRNA(Thr) in a two-step reaction: L-threonine is first activated by ATP to form Thr-AMP and then transferred to the acceptor end of tRNA(Thr). Also edits incorrectly charged L-seryl-tRNA(Thr). In Clostridium perfringens (strain SM101 / Type A), this protein is Threonine--tRNA ligase.